The primary structure comprises 702 residues: MA3 DOMAIN-CONTAINING TRANSLATION REGULATORY FACTOR 1 (702 aa).

A disordered region spans residues Leu-39–Lys-66. A compositionally biased stretch (basic residues) spans Arg-57–Lys-66. An MI 1 domain is found at Asp-122–Lys-243. The short motif at Glu-273–Thr-280 is the Nuclear localization signal 1 element. 3 MI domains span residues Glu-286 to Gln-407, Gln-420 to Thr-541, and Asp-583 to Gln-702. The Nuclear localization signal 2 signature appears at Leu-458–Ala-465.

It belongs to the PDCD4 family. In terms of assembly, binds to EIF4A1, S6K1 and S6K2. The association with ribosomes is modulated by cellular energy status and TOR activity. Post-translationally, phosphorylation by S6 kinases (e.g. S6K1 and S6K2) is modulated by cellular energy status and TOR activity. As to expression, mostly expressed in vegetative tissues, such as leaves, roots and stems, and, to a lower extent, in reproductive tissues, such as flower buds and flowers.

It localises to the nucleus. It is found in the cytoplasm. Its subcellular location is the cytosol. Its function is as follows. Involved in target of rapamycin (TOR)-regulated translation control, especially under energy-deficient conditions. The sequence is that of MA3 DOMAIN-CONTAINING TRANSLATION REGULATORY FACTOR 1 from Arabidopsis thaliana (Mouse-ear cress).